The primary structure comprises 414 residues: Carboxynorspermidine synthase (414 aa).

The protein belongs to the saccharopine dehydrogenase family. Carboxynorspermidine synthase subfamily.

It catalyses the reaction carboxynorspermidine + NADP(+) + H2O = L-aspartate 4-semialdehyde + propane-1,3-diamine + NADPH + H(+). It carries out the reaction carboxyspermidine + NADP(+) + H2O = L-aspartate 4-semialdehyde + putrescine + NADPH + H(+). Functionally, involved in norspermidine biosynthesis. Catalyzes the synthesis of carboxynorspermidine from L-aspartate 4-semialdehyde and 1,3-diaminopropane. Is also active with putrescine as a substrate. Essential for biofilm formation. The polypeptide is Carboxynorspermidine synthase (Vibrio cholerae serotype O1 (strain ATCC 39315 / El Tor Inaba N16961)).